A 1636-amino-acid chain; its full sequence is Tyrosine-protein phosphatase non-receptor type 23 (1636 aa).

A BRO1 domain is found at 8 to 394 (PMIWLDLKEA…AKIEDKNEVL (387 aa)). TPR repeat units follow at residues 250 to 283 (AVAH…LNEA) and 374 to 407 (EEKA…DPET). A coiled-coil region spans residues 550-623 (KAVLQNLKRI…VYLEQNLAAQ (74 aa)). The span at 701–714 (EAARQQLLDRELKK) shows a compositional bias: basic and acidic residues. Disordered regions lie at residues 701 to 812 (EAAR…GPHA) and 888 to 1151 (QAPI…AAEG). A Phosphoserine modification is found at S733. The segment at 770–1130 (HFPPSPFPSS…SSSPESQHGG (361 aa)) is his. Pro residues-rich tracts occupy residues 898–922 (RPNP…PTPY) and 950–962 (RIGP…PQPH). R950 carries the post-translational modification Omega-N-methylarginine. Tandem repeats lie at residues 953–954 (PQ), 955–956 (PQ), 957–958 (PH), 959–960 (PQ), 961–962 (PH), and 963–964 (PS). Positions 953–964 (PQPQPHPQPHPS) are 6 X 2 AA approximate tandem repeats of P-Q. Pro residues-rich tracts occupy residues 983–1002 (LFPP…PYAP), 1036–1050 (FPSP…PPLA), and 1083–1109 (HLVP…PPPC). Residues 1120-1131 (LSSSPESQHGGT) show a composition bias toward polar residues. Residues S1122 and S1123 each carry the phosphoserine modification. T1131 bears the Phosphothreonine mark. The Tyrosine-protein phosphatase domain occupies 1192–1452 (DTVWRELQDA…RFCYEAVVRH (261 aa)). C1392 acts as the Phosphocysteine intermediate in catalysis. The tract at residues 1513–1636 (LESPVASLPG…LDPLWTLNKT (124 aa)) is disordered. 2 stretches are compositionally biased toward pro residues: residues 1523 to 1533 (PAEPPGLPPAS) and 1542 to 1556 (SSSP…PEAP). Low complexity predominate over residues 1567 to 1587 (APSSGPPSSSLELLASLTPEA). R1615 is modified (omega-N-methylarginine).

This sequence belongs to the protein-tyrosine phosphatase family. Non-receptor class subfamily. Interacts with GRAP2 and GRB2. Interacts with UBAP1. Interacts with CHMP4B.

It is found in the nucleus. The protein localises to the cytoplasm. Its subcellular location is the cytoplasmic vesicle. The protein resides in the endosome. It localises to the cytoskeleton. It is found in the cilium basal body. The protein localises to the early endosome. The enzyme catalyses O-phospho-L-tyrosyl-[protein] + H2O = L-tyrosyl-[protein] + phosphate. Functionally, plays a role in sorting of endocytic ubiquitinated cargos into multivesicular bodies (MVBs) via its interaction with the ESCRT-I complex (endosomal sorting complex required for transport I), and possibly also other ESCRT complexes. May act as a negative regulator of Ras-mediated mitogenic activity. Plays a role in ciliogenesis. The chain is Tyrosine-protein phosphatase non-receptor type 23 (PTPN23) from Homo sapiens (Human).